The following is a 705-amino-acid chain: Elongation factor G (705 aa).

One can recognise a tr-type G domain in the interval 8-290 (ERYRNFGIMA…GVVHLLPSPA (283 aa)). GTP-binding positions include 17-24 (AHIDAGKT), 88-92 (DTPGH), and 142-145 (NKMD). Residues 290–309 (ADRPPVQGIDEDEKEDTRAA) form a disordered region.

This sequence belongs to the TRAFAC class translation factor GTPase superfamily. Classic translation factor GTPase family. EF-G/EF-2 subfamily.

It is found in the cytoplasm. Its function is as follows. Catalyzes the GTP-dependent ribosomal translocation step during translation elongation. During this step, the ribosome changes from the pre-translocational (PRE) to the post-translocational (POST) state as the newly formed A-site-bound peptidyl-tRNA and P-site-bound deacylated tRNA move to the P and E sites, respectively. Catalyzes the coordinated movement of the two tRNA molecules, the mRNA and conformational changes in the ribosome. This Xanthomonas oryzae pv. oryzae (strain MAFF 311018) protein is Elongation factor G.